A 124-amino-acid polypeptide reads, in one-letter code: Cytochrome c oxidase subunit 4 isoform 1, mitochondrial (124 aa).

Residue lysine 4 is modified to N6-acetyllysine; alternate. An N6-succinyllysine; alternate modification is found at lysine 4. 2 positions are modified to phosphoserine: serine 31 and serine 33. The residue at position 35 (lysine 35) is an N6-acetyllysine; alternate. Lysine 35 bears the N6-succinyllysine; alternate mark. Lysine 42 carries the N6-acetyllysine modification.

The protein belongs to the cytochrome c oxidase IV family. In terms of assembly, component of the cytochrome c oxidase (complex IV, CIV), a multisubunit enzyme composed of 14 subunits. The complex is composed of a catalytic core of 3 subunits MT-CO1, MT-CO2 and MT-CO3, encoded in the mitochondrial DNA, and 11 supernumerary subunits COX4I, COX5A, COX5B, COX6A, COX6B, COX6C, COX7A, COX7B, COX7C, COX8 and NDUFA4, which are encoded in the nuclear genome. The complex exists as a monomer or a dimer and forms supercomplexes (SCs) in the inner mitochondrial membrane with NADH-ubiquinone oxidoreductase (complex I, CI) and ubiquinol-cytochrome c oxidoreductase (cytochrome b-c1 complex, complex III, CIII), resulting in different assemblies (supercomplex SCI(1)III(2)IV(1) and megacomplex MCI(2)III(2)IV(2)). Interacts with PHB2; the interaction decreases in absence of SPHK2. Interacts with AFG1L. Interacts with ABCB7; this interaction allows the regulation of cellular iron homeostasis and cellular reactive oxygen species (ROS) levels in cardiomyocytes. Interacts with FLVCR2; this interaction occurs in the absence of heme and is disrupted upon heme binding. Interacts with IRGC.

The protein resides in the mitochondrion inner membrane. It participates in energy metabolism; oxidative phosphorylation. In terms of biological role, component of the cytochrome c oxidase, the last enzyme in the mitochondrial electron transport chain which drives oxidative phosphorylation. The respiratory chain contains 3 multisubunit complexes succinate dehydrogenase (complex II, CII), ubiquinol-cytochrome c oxidoreductase (cytochrome b-c1 complex, complex III, CIII) and cytochrome c oxidase (complex IV, CIV), that cooperate to transfer electrons derived from NADH and succinate to molecular oxygen, creating an electrochemical gradient over the inner membrane that drives transmembrane transport and the ATP synthase. Cytochrome c oxidase is the component of the respiratory chain that catalyzes the reduction of oxygen to water. Electrons originating from reduced cytochrome c in the intermembrane space (IMS) are transferred via the dinuclear copper A center (CU(A)) of subunit 2 and heme A of subunit 1 to the active site in subunit 1, a binuclear center (BNC) formed by heme A3 and copper B (CU(B)). The BNC reduces molecular oxygen to 2 water molecules using 4 electrons from cytochrome c in the IMS and 4 protons from the mitochondrial matrix. The chain is Cytochrome c oxidase subunit 4 isoform 1, mitochondrial (COX4I1) from Saimiri sciureus (Common squirrel monkey).